Reading from the N-terminus, the 324-residue chain is Olfactory receptor 7G2 (324 aa).

Residues 1–25 (MEARNQTAISKFLLLGLIEDPELQP) lie on the Extracellular side of the membrane. Residue asparagine 5 is glycosylated (N-linked (GlcNAc...) asparagine). Residues 26-46 (VLFSLFLSMYLVTILGNLLIL) traverse the membrane as a helical segment. Topologically, residues 47–54 (LAVISDSH) are cytoplasmic. A helical membrane pass occupies residues 55-75 (LHTPMYFFLSNLSFLDICLST). Over 76–99 (TTIPKMLVNIQAQNRSITYSGCLT) the chain is Extracellular. N-linked (GlcNAc...) asparagine glycosylation occurs at asparagine 89. A disulfide bridge links cysteine 97 with cysteine 189. A helical membrane pass occupies residues 100-120 (QICFVLFFAGLENCLLAAMAY). Topologically, residues 121 to 139 (DRYVAICHPLRYTVIMNPR) are cytoplasmic. Residues 140-160 (LCGLLILLSLLTSVVNALLLS) form a helical membrane-spanning segment. At 161–197 (LMVLRLSFCTDLEIPLFFCELAQVIQLTCSDTLINNI) the chain is on the extracellular side. The helical transmembrane segment at 198–217 (LIYFAACIFGGVPLSGIILS) threads the bilayer. Over 218–237 (YTQITSCVLRMPSASGKHKA) the chain is Cytoplasmic. A helical transmembrane segment spans residues 238–258 (VSTCGSHLSIVLLFYGAGLGV). Over 259–271 (YISSVVTDSPRKT) the chain is Extracellular. A helical membrane pass occupies residues 272–292 (AVASVMYSVFPQMVNPFIYSL). The Cytoplasmic portion of the chain corresponds to 293 to 324 (RNKDMKGTLRKFIGRIPSLLWCAICFGFRFLE).

This sequence belongs to the G-protein coupled receptor 1 family.

It is found in the cell membrane. Its function is as follows. Odorant receptor. The sequence is that of Olfactory receptor 7G2 (OR7G2) from Homo sapiens (Human).